A 619-amino-acid polypeptide reads, in one-letter code: DEAD-box ATP-dependent RNA helicase 35B (619 aa).

Low complexity-rich tracts occupy residues 1–10 and 49–58; these read MAAAAAAAAA and PPTTNAVAVA. A disordered region spans residues 1 to 72; the sequence is MAAAAAAAAA…PPRSTSSPAV (72 aa). A Q motif motif is present at residues 173–201; sequence RSFGDLRLPEPILRALRGKGIEKPTPIQV. Residues 204–388 form the Helicase ATP-binding domain; sequence LPVALSGRDM…KSALVKPIIV (185 aa). Residue 217 to 224 participates in ATP binding; that stretch reads AFTGSGKT. The DEAD box motif lies at 336–339; sequence DEAD. The Helicase C-terminal domain occupies 399–559; that stretch reads DVIQEVEYVK…RLPPILADLD (161 aa). The CCHC-type zinc finger occupies 576 to 593; sequence KGCAFCGGLGHRIEACPK.

The protein belongs to the DEAD box helicase family. DDX41 subfamily.

It carries out the reaction ATP + H2O = ADP + phosphate + H(+). The polypeptide is DEAD-box ATP-dependent RNA helicase 35B (Oryza sativa subsp. japonica (Rice)).